Reading from the N-terminus, the 110-residue chain is Large ribosomal subunit protein uL22 (110 aa).

It belongs to the universal ribosomal protein uL22 family. As to quaternary structure, part of the 50S ribosomal subunit.

In terms of biological role, this protein binds specifically to 23S rRNA; its binding is stimulated by other ribosomal proteins, e.g. L4, L17, and L20. It is important during the early stages of 50S assembly. It makes multiple contacts with different domains of the 23S rRNA in the assembled 50S subunit and ribosome. Functionally, the globular domain of the protein is located near the polypeptide exit tunnel on the outside of the subunit, while an extended beta-hairpin is found that lines the wall of the exit tunnel in the center of the 70S ribosome. The sequence is that of Large ribosomal subunit protein uL22 from Hydrogenovibrio crunogenus (strain DSM 25203 / XCL-2) (Thiomicrospira crunogena).